Consider the following 1358-residue polypeptide: Insulin-like growth factor 1 receptor (1358 aa).

Residues 1–25 (MKAELVPVCTAWILGLLLCLGPAAA) form the signal peptide. Cysteine 28 and cysteine 47 are oxidised to a cystine. N-linked (GlcNAc...) asparagine glycosylation is found at asparagine 74, asparagine 99, and asparagine 132. Disulfide bonds link cysteine 147–cysteine 175, cysteine 179–cysteine 202, cysteine 189–cysteine 208, cysteine 212–cysteine 221, cysteine 216–cysteine 227, cysteine 228–cysteine 236, cysteine 232–cysteine 245, cysteine 248–cysteine 257, cysteine 261–cysteine 273, cysteine 279–cysteine 299, cysteine 303–cysteine 317, cysteine 320–cysteine 324, and cysteine 328–cysteine 347. Asparagine 241 carries an N-linked (GlcNAc...) asparagine glycan. N-linked (GlcNAc...) asparagine glycosylation is present at asparagine 310. 2 N-linked (GlcNAc...) asparagine glycosylation sites follow: asparagine 411 and asparagine 432. Cysteine 449 and cysteine 482 form a disulfide bridge. Fibronectin type-III domains are found at residues 483 to 603 (ESHV…TDAA), 604 to 702 (VPSI…TEAE), 727 to 818 (PRPN…FVFA), and 829 to 924 (IPGI…LKPD). Residues asparagine 488, asparagine 528, asparagine 616, asparagine 634, and asparagine 669 are each glycosylated (N-linked (GlcNAc...) asparagine). Residues 670–691 (GTIDTEGGTEPTKPEGSVGEKG) form a disordered region. The Extracellular segment spans residues 735-934 (DVLAVGNSTV…VRNNILQMVV (200 aa)). 5 N-linked (GlcNAc...) asparagine glycosylation sites follow: asparagine 741, asparagine 750, asparagine 758, asparagine 895, and asparagine 908. The helical transmembrane segment at 935-955 (AIPLALSFLLVGIISIVCFVF) threads the bilayer. Residues 956-1358 (KKRNSNRLGN…ALPLPQSSAC (403 aa)) are Cytoplasmic-facing. Position 976 is a phosphotyrosine; by autocatalysis (tyrosine 976). Residues 995-1270 (ITMNRELGQG…SIKDELDPGF (276 aa)) enclose the Protein kinase domain. Residues 1001–1009 (LGQGSFGMV) and lysine 1029 contribute to the ATP site. Aspartate 1131 (proton acceptor) is an active-site residue. 3 positions are modified to phosphotyrosine; by autocatalysis: tyrosine 1157, tyrosine 1161, and tyrosine 1162. The segment at 1336-1358 (PYAHMNGGRKNERALPLPQSSAC) is disordered.

It belongs to the protein kinase superfamily. Tyr protein kinase family. Insulin receptor subfamily. Tetramer of 2 alpha and 2 beta chains linked by disulfide bonds. The alpha chains contribute to the formation of the ligand-binding domain, while the beta chain carries the kinase domain. Mn(2+) serves as cofactor. Post-translationally, the cytoplasmic domain of the beta subunit is autophosphorylated on Tyr residues in response to low concentrations of insulin-like growth factor (IGF1) and higher concentrations of insulin.

It localises to the cell membrane. It catalyses the reaction L-tyrosyl-[protein] + ATP = O-phospho-L-tyrosyl-[protein] + ADP + H(+). Its activity is regulated as follows. Autophosphorylation activates the kinase activity. Functionally, this receptor binds insulin-like growth factor 1 (IGF1) with a high affinity and IGF2 with a lower affinity. It has a tyrosine-protein kinase activity, which is necessary for the activation of the IGF1-stimulated downstream signaling cascade. Plays a role in oocyte maturation. Promotes head development by inhibiting Wnt signaling during embryogenesis. The chain is Insulin-like growth factor 1 receptor (igf1r) from Xenopus laevis (African clawed frog).